The primary structure comprises 233 residues: 2,3,4,5-tetrahydropyridine-2,6-dicarboxylate N-acetyltransferase (233 aa).

Belongs to the transferase hexapeptide repeat family. DapH subfamily.

It catalyses the reaction (S)-2,3,4,5-tetrahydrodipicolinate + acetyl-CoA + H2O = L-2-acetamido-6-oxoheptanedioate + CoA. The protein operates within amino-acid biosynthesis; L-lysine biosynthesis via DAP pathway; LL-2,6-diaminopimelate from (S)-tetrahydrodipicolinate (acetylase route): step 1/3. Functionally, catalyzes the transfer of an acetyl group from acetyl-CoA to tetrahydrodipicolinate. The chain is 2,3,4,5-tetrahydropyridine-2,6-dicarboxylate N-acetyltransferase from Oenococcus oeni (strain ATCC BAA-331 / PSU-1).